A 257-amino-acid chain; its full sequence is Diacetyl reductase [(S)-acetoin forming] (257 aa).

An NAD(+)-binding site is contributed by 6–30 (IITGAAGGLGKGIAERLANDGFNIV). Ser139 is a substrate binding site. Catalysis depends on Tyr152, which acts as the Proton acceptor. Lys156 is a catalytic residue.

This sequence belongs to the short-chain dehydrogenases/reductases (SDR) family.

The catalysed reaction is (S)-acetoin + NAD(+) = diacetyl + NADH + H(+). In terms of biological role, catalyzes the irreversible reduction of 2,3-butanediol to (S)-acetoin in the presence of NADH. This is Diacetyl reductase [(S)-acetoin forming] (butA) from Staphylococcus epidermidis (strain ATCC 12228 / FDA PCI 1200).